Reading from the N-terminus, the 299-residue chain is Homoserine O-acetyltransferase (299 aa).

Cys142 (acyl-thioester intermediate) is an active-site residue. Substrate is bound by residues Lys163 and Ser192. His235 functions as the Proton acceptor in the catalytic mechanism. Glu237 is an active-site residue. Arg249 contributes to the substrate binding site.

It belongs to the MetA family.

The protein resides in the cytoplasm. It catalyses the reaction L-homoserine + acetyl-CoA = O-acetyl-L-homoserine + CoA. The protein operates within amino-acid biosynthesis; L-methionine biosynthesis via de novo pathway; O-acetyl-L-homoserine from L-homoserine: step 1/1. Transfers an acetyl group from acetyl-CoA to L-homoserine, forming acetyl-L-homoserine. In Synechococcus elongatus (strain ATCC 33912 / PCC 7942 / FACHB-805) (Anacystis nidulans R2), this protein is Homoserine O-acetyltransferase.